The primary structure comprises 623 residues: Kelch-like protein diablo (623 aa).

Residues 1-54 (MGDLPGSGSTAQPRDAAVTGTGGNSTAGGGSSVGSTAVDRPPSPARLSHTSEKH) form a disordered region. Thr-19 is subject to Phosphothreonine. Over residues 20–32 (GTGGNSTAGGGSS) the composition is skewed to gly residues. The BTB domain occupies 72-139 (CDVVLNVGGR…CYTAHIIVEE (68 aa)). Residues 174–276 (CLGIRAFADT…SPKFLVGTVG (103 aa)) form the BACK domain. Kelch repeat units lie at residues 323-369 (VLFA…VLND), 371-417 (LYAV…VLDE), 418-464 (FLYA…VLGG), 466-511 (LYAI…VFNN), 513-558 (IYAV…VVNG), and 559-605 (QLYA…VMRA).

It participates in protein modification; protein ubiquitination. Probable substrate-specific adapter of an E3 ubiquitin-protein ligase complex which mediates the ubiquitination and subsequent proteasomal degradation of target proteins. May have a role in synapse differentiation and growth. The protein is Kelch-like protein diablo of Drosophila simulans (Fruit fly).